A 449-amino-acid polypeptide reads, in one-letter code: MFS-type transporter hasB (449 aa).

12 helical membrane-spanning segments follow: residues 44–64 (VAGS…CGIF), 80–100 (ALAW…PAVG), 112–132 (LPPF…CTKY), 135–155 (VMLA…LPAM), 168–188 (LAVG…PCML), 195–215 (VGFA…LFIA), 255–275 (LPWG…FAPL), 296–316 (AIAN…SDII), 322–342 (MCIV…PLEF), 346–366 (LAGI…FVSL), 387–407 (GGFC…EGAI), and 415–435 (FTGL…CTGT).

This sequence belongs to the major facilitator superfamily. Monocarboxylate porter (TC 2.A.1.13) family.

The protein localises to the membrane. Functionally, MFS-type transporter; part of the gene cluster that mediates the biosynthesis of hexadehydro-astechrome (HAS), a tryptophan-derived iron(III)-complex that acts as a virulence factor in infected mice. Required for the production of HAS. This Aspergillus fumigatus (strain CBS 144.89 / FGSC A1163 / CEA10) (Neosartorya fumigata) protein is MFS-type transporter hasB.